A 430-amino-acid polypeptide reads, in one-letter code: Small ribosomal subunit protein uS9m (430 aa).

The transit peptide at 1–34 (MLSRLFLRHSNLRFVTLVSSKSNSQIFSSFIRPL) directs the protein to the mitochondrion. Residues 32–97 (RPLSTNSSGG…GGEGKWPEEP (66 aa)) form a disordered region. Residues 39 to 48 (SGGGGNGDGN) show a composition bias toward gly residues. Over residues 68–79 (GPFSSDDSFGSS) the composition is skewed to low complexity. The span at 80–91 (GVAGSGLPGGEG) shows a compositional bias: gly residues.

The protein belongs to the universal ribosomal protein uS9 family. In terms of assembly, interacts (via C terminus) with PIA2. Component of the mitochondrial ribosome small subunit. As to expression, expressed in root tips, young leaves, flowers and siliques.

The protein resides in the mitochondrion. Functionally, mitochondrial ribosomal protein required for central cell maturation. May work together with PIA2 in controlling female gametophyte development, possibly by regulating the expression of some mitochondrial proteins. The chain is Small ribosomal subunit protein uS9m from Arabidopsis thaliana (Mouse-ear cress).